Consider the following 309-residue polypeptide: Cytochrome c biogenesis protein CcsA (309 aa).

Helical transmembrane passes span 18–38 (LGIL…GAVF), 43–63 (FFIV…QLLF), 67–87 (ISGH…AWGI), 102–122 (IIPS…CFVL), 148–168 (VMLS…VLFI), 216–236 (SILI…VWAN), 250–267 (TWAF…HMRI), and 279–299 (LATS…FLGI).

It belongs to the CcmF/CycK/Ccl1/NrfE/CcsA family. In terms of assembly, may interact with ccs1.

It is found in the cellular thylakoid membrane. Functionally, required during biogenesis of c-type cytochromes (cytochrome c6 and cytochrome f) at the step of heme attachment. The protein is Cytochrome c biogenesis protein CcsA of Prochlorococcus marinus (strain MIT 9312).